A 451-amino-acid polypeptide reads, in one-letter code: UDP-glycosyltransferase 76E11 (451 aa).

UDP-alpha-D-glucose-binding positions include S273, A332 to Q334, H349 to E357, and S371 to Q374.

Belongs to the UDP-glycosyltransferase family.

In terms of biological role, possesses low quercetin 3-O-glucosyltransferase and 7-O-glucosyltransferase activities in vitro. In Arabidopsis thaliana (Mouse-ear cress), this protein is UDP-glycosyltransferase 76E11 (UGT76E11).